Consider the following 1220-residue polypeptide: MMLSASPNTLAKSSLEEMLESLRQKDECDRPKDMPPALPSRPNSRARLPSARRSLPANFNVSSVMEDQNGSVVSVTPAVEAESERKEEGVKRKEKDLGVKRNSFGSKKMRTGLRSESPYAAEKEEEGVKISIAKVSLVENTEEHNKPESEWNNNVEYFIKKKLRVWCRVSNGQWQLGKIQSTSADTSLVMLSTANVVKVSTEELFPANPDILEGVEDLIQLSYLNEPSVLYNLRVRYLQDVIYSKAGPVLIAVNPFKNVEIYGNDVISAYQKKVMDAPHVYAVADAAYDEMMREEKNQSLIISGESGAGKTETAKFAMQYLAALGGGSCGVEYEILKTTCILEAFGNAKTSRNANSSRFGKLIEIHFSAMGKICGAKLETFLLEKSRVVQLFNGERSYHIFYELCAGASPILKERLKLKTASEYTYLSQSDCLTIAGVDDAQKFHKLLEAFDIVQIPKEHQERAFALLAAVLWLGNVSFRVTDNENHVEVVADEAVANAAMLMGCNTEELMVVLSTRKLQAGTDCIAKKLTLRQATDMRDGIAKFIYANLFDWLVEQINIALEVGKSRTGRSISILDIYGFESFKNNSFEQFCINYANERLQQHFNRHLFKLEQEEYEEDGIDWTKVEFVDNQECLDLIEKKPIGLLSLLDEESNFPKATDLTFANKLKQHLKTNSCFKGERGRAFRVNHYAGEVLYDTNGFLEKNRDPLPADLINLLSSCDCQLLKLFSTKMRGKSQKPLMLSDSTNQTVGTKFKGQLFKLMNKLENTSPHFIRCIKPNSKQLPRVYEEDLVLQQLRCCGVLEVVRISRSGYPTRLTHQEFAGRYGFLLSDKKVAQDPLSVSIAVLKQYDVHPEMYQVGYTKLYLRTGQIGIFEDRRKKVLQGIVGLQKHFRGHLSRAYFQNMRKVTLVLQSYIRGENARRLFDTEAKFHADSVSEASTDELSAVIHLQSAVRGWLARKHFNSMQRQKELRNVATKSKRKAGRRISEDKDIPLEQPQVQPTSMSDLQKRILKSEAALSQKEEENTALREQLRQFEERWSEYDIKMKSMEETWQKQMSSLQMSLAAARKSLAAESITGQAGGRQDTSISPFGYDSEDTMSTGTPGVRTPTNKFTNGNTPELRIRELNGSLNAVNHLAREFDQRRLNFDEDARAIVEVKLGPQATPNGQQQQHPEDEFRRLKLRFETWKKDYKARLRDTKARLHRVDGDKGRHRKWWGKRG.

Residues 1-12 (MMLSASPNTLAK) are compositionally biased toward polar residues. 2 disordered regions span residues 1-54 (MMLS…ARRS) and 68-95 (QNGS…RKEK). Basic and acidic residues predominate over residues 20–33 (ESLRQKDECDRPKD). Low complexity predominate over residues 40–54 (SRPNSRARLPSARRS). Over residues 82–95 (ESERKEEGVKRKEK) the composition is skewed to basic and acidic residues. Positions 160-209 (KKKLRVWCRVSNGQWQLGKIQSTSADTSLVMLSTANVVKVSTEELFPANP) constitute a Myosin N-terminal SH3-like domain. Residues 213 to 879 (EGVEDLIQLS…QIGIFEDRRK (667 aa)) enclose the Myosin motor domain. ATP is bound by residues 304–311 (GESGAGKT) and 353–361 (NANSSRFGK). 2 actin-binding regions span residues 638–672 (LIEK…KQHL) and 759–781 (LFKL…KPNS). IQ domains are found at residues 881–910 (VLQG…VTLV), 904–933 (MRKV…FHAD), and 942–971 (ELSA…QKEL). Disordered regions lie at residues 968–1007 (QKEL…MSDL) and 1075–1118 (SITG…NGNT). 2 stretches are compositionally biased toward polar residues: residues 997-1006 (PQVQPTSMSD) and 1098-1118 (TMST…NGNT). Residues 1003 to 1071 (SMSDLQKRIL…MSLAAARKSL (69 aa)) are a coiled coil.

Belongs to the TRAFAC class myosin-kinesin ATPase superfamily. Myosin family. Plant myosin class VIII subfamily. As to quaternary structure, homodimer. In terms of tissue distribution, expressed in flowers, leaves and roots.

The protein resides in the cell junction. It localises to the plasmodesma. Its subcellular location is the endosome. Functionally, myosin heavy chain that is required for the cell cycle-regulated transport of various organelles and proteins for their segregation. Functions by binding with its tail domain to receptor proteins on organelles and exerting force with its N-terminal motor domain against actin filaments, thereby transporting its cargo along polarized actin cables. Involved in endocytosis via its action in endosomal trafficking. The sequence is that of Myosin-2 (VIII-2) from Arabidopsis thaliana (Mouse-ear cress).